The primary structure comprises 525 residues: Peptide chain release factor 3 (525 aa).

A tr-type G domain is found at 9 to 276 (AKRRTFAIIS…GFTTYAPEPQ (268 aa)). GTP-binding positions include 18–25 (SHPDAGKT), 86–90 (DTPGH), and 140–143 (NKFD).

This sequence belongs to the TRAFAC class translation factor GTPase superfamily. Classic translation factor GTPase family. PrfC subfamily.

The protein resides in the cytoplasm. Functionally, increases the formation of ribosomal termination complexes and stimulates activities of RF-1 and RF-2. It binds guanine nucleotides and has strong preference for UGA stop codons. It may interact directly with the ribosome. The stimulation of RF-1 and RF-2 is significantly reduced by GTP and GDP, but not by GMP. The protein is Peptide chain release factor 3 of Francisella philomiragia subsp. philomiragia (strain ATCC 25017 / CCUG 19701 / FSC 153 / O#319-036).